A 154-amino-acid chain; its full sequence is 6,7-dimethyl-8-ribityllumazine synthase (154 aa).

5-amino-6-(D-ribitylamino)uracil contacts are provided by residues 22–23 (FN), 56–58 (SWE), and 80–82 (VLI). 85–86 (AT) is a (2S)-2-hydroxy-3-oxobutyl phosphate binding site. The active-site Proton donor is the His88. Position 113 (Phe113) interacts with 5-amino-6-(D-ribitylamino)uracil. A (2S)-2-hydroxy-3-oxobutyl phosphate-binding site is contributed by Arg127. Lys135 contacts 5-amino-6-(D-ribitylamino)uracil.

This sequence belongs to the DMRL synthase family. In terms of assembly, forms an icosahedral capsid composed of 60 subunits, arranged as a dodecamer of pentamers.

The catalysed reaction is (2S)-2-hydroxy-3-oxobutyl phosphate + 5-amino-6-(D-ribitylamino)uracil = 6,7-dimethyl-8-(1-D-ribityl)lumazine + phosphate + 2 H2O + H(+). It functions in the pathway cofactor biosynthesis; riboflavin biosynthesis; riboflavin from 2-hydroxy-3-oxobutyl phosphate and 5-amino-6-(D-ribitylamino)uracil: step 1/2. In terms of biological role, catalyzes the formation of 6,7-dimethyl-8-ribityllumazine by condensation of 5-amino-6-(D-ribitylamino)uracil with 3,4-dihydroxy-2-butanone 4-phosphate. This is the penultimate step in the biosynthesis of riboflavin. The protein is 6,7-dimethyl-8-ribityllumazine synthase (ribH) of Aquifex aeolicus (strain VF5).